We begin with the raw amino-acid sequence, 456 residues long: DnaJ homolog dnj-10 (456 aa).

Residues 44-108 (DYYKTLGVDK…TKRQEYDAYG (65 aa)) form the J domain. The CR-type zinc-finger motif lies at 178–257 (GATKNVSVNV…CEGEGQTVQR (80 aa)). 3 CXXCXGXG motif repeats span residues 208 to 215 (CPYCNGTG), 231 to 238 (CNRCRGSG), and 245 to 252 (CQECEGEG). Positions 395-429 (KGLEKNQKTEEKETKKNEEKKSEGASESQKRRSEP) are enriched in basic and acidic residues. The interval 395–443 (KGLEKNQKTEEKETKKNEEKKSEGASESQKRRSEPVAENAETIDENQEN) is disordered.

This chain is DnaJ homolog dnj-10 (dnj-10), found in Caenorhabditis elegans.